Here is a 378-residue protein sequence, read N- to C-terminus: Serpin B6 (378 aa).

N-acetylmethionine is present on Met1. The residue at position 196 (Lys196) is an N6-acetyllysine.

The protein belongs to the serpin family. Ov-serpin subfamily. As to quaternary structure, forms a complex with the monomeric form of beta-tryptase. In terms of tissue distribution, brain.

The protein resides in the cytoplasm. Its function is as follows. Inhibitor of cathepsin G, kallikrein-8 and thrombin. May play an important role in the inner ear in the protection against leakage of lysosomal content during stress. May be involved in the regulation of serine proteinases present in the brain or extravasated from the blood. The protein is Serpin B6 (SERPINB6) of Bos taurus (Bovine).